A 606-amino-acid chain; its full sequence is Leucine-rich repeat and immunoglobulin-like domain-containing nogo receptor-interacting protein 2 (606 aa).

Positions 1–27 are cleaved as a signal peptide; sequence MLHTAIPCWQPFLGLAVVLLLMGSTIG. In terms of domain architecture, LRRNT spans 28–57; sequence CPARCECSAQNKSVSCHRRRLLAIPEGIPI. The Extracellular segment spans residues 28–545; it reads CPARCECSAQ…LDLKTILVST (518 aa). The N-linked (GlcNAc...) asparagine glycan is linked to N38. LRR repeat units follow at residues 58–79, 82–103, 106–127, 130–151, 154–175, 178–199, 202–223, 226–247, 250–271, 274–295, 298–319, and 322–343; these read ETKI…EFIS, LLEE…AFNN, NLRS…VFTG, NLTK…MFQD, NLKS…AFSG, SLEQ…ALSH, SLIA…AFKR, HLKN…NSLY, NLTS…AFKH, YLTH…MFSD, RLQE…SFQG, and FLRV…VFSS. N-linked (GlcNAc...) asparagine glycosylation is present at N130. N-linked (GlcNAc...) asparagine glycosylation occurs at N188. 3 N-linked (GlcNAc...) asparagine glycosylation sites follow: N250, N260, and N279. The N-linked (GlcNAc...) asparagine glycan is linked to N327. Positions 355–409 constitute an LRRCT domain; sequence NPLACDCRLLWLLQRQPNLQFGGQQPMCAGPDTIRERSFKDFHSTALSFYFTCKK. C432 and C483 form a disulfide bridge. N-linked (GlcNAc...) asparagine glycosylation is found at N491, N522, and N527. The helical transmembrane segment at 546–566 threads the bilayer; it reads AMGCFTFLGVVLFCFLLLFVW. The Cytoplasmic portion of the chain corresponds to 567 to 606; that stretch reads SRGKGKHKNSIDLEYVPRKNNGAVVEGEVAGPRRFNMKMI.

Its subcellular location is the membrane. The sequence is that of Leucine-rich repeat and immunoglobulin-like domain-containing nogo receptor-interacting protein 2 (Lingo2) from Mus musculus (Mouse).